The chain runs to 138 residues: Putative pre-16S rRNA nuclease (138 aa).

Belongs to the YqgF nuclease family.

Its subcellular location is the cytoplasm. Its function is as follows. Could be a nuclease involved in processing of the 5'-end of pre-16S rRNA. The sequence is that of Putative pre-16S rRNA nuclease from Bacteroides fragilis (strain ATCC 25285 / DSM 2151 / CCUG 4856 / JCM 11019 / LMG 10263 / NCTC 9343 / Onslow / VPI 2553 / EN-2).